A 759-amino-acid chain; its full sequence is LIM domain and actin-binding protein 1 (759 aa).

An N-acetylmethionine modification is found at Met1. Phosphoserine is present on residues Ser4, Ser15, and Ser55. The segment at 78-131 (NPGLGAESHTDSLRNSSTEIRHRADHPPAEVTSHAASGAKADQEEQIHPRSRLR) is disordered. Residues 96–105 (EIRHRADHPP) show a composition bias toward basic and acidic residues. Ser132 is modified (phosphoserine). Residues 146 to 177 (KDGEDLKDHSTESKKMENCLGESRHEVEKSEI) are compositionally biased toward basic and acidic residues. The segment at 146–182 (KDGEDLKDHSTESKKMENCLGESRHEVEKSEISENTD) is disordered. Residues 164-166 (CLG) carry the Required for interaction with NPC1L1 motif. 2 positions are modified to phosphoserine: Ala183 and Ser225. Disordered stretches follow at residues 211-264 (ILRA…RLSE) and 323-381 (EKIS…AMKK). The residue at position 229 (Tyr229) is a Phosphotyrosine. Phosphoserine occurs at positions 230 and 242. Positions 247–258 (DSEKNESRRNLE) are enriched in basic and acidic residues. Phosphoserine is present on residues Ser263, Ser343, Ser350, Ser362, Ser365, Ser369, and Ser374. Residues 362 to 376 (SPDSRASSLSESSPP) show a composition bias toward low complexity. An LIM zinc-binding domain is found at 388–448 (ETCVECQKTV…KPHFNQLFKS (61 aa)). Lys439 carries the post-translational modification N6-succinyllysine. Phosphoserine is present on Ser490. The interval 493–513 (VEDAPIAKVGVLAASMEAKAS) is required for interaction with MYO5B. The segment at 509 to 709 (EAKASSQQEK…QEPKSLNWSS (201 aa)) is disordered. Composition is skewed to basic and acidic residues over residues 516–527 (QEKEDKPAETKK) and 556–567 (WPPEDEISKPEV). The span at 595-607 (ASFQSTSVKSPKT) shows a compositional bias: polar residues. Ser601, Ser604, Ser609, and Ser617 each carry phosphoserine. The segment covering 644–655 (KNGNVGKTTWQN) has biased composition (polar residues). Residues 656–673 (KESKGETGKRSKEGHSLE) are compositionally biased toward basic and acidic residues. The segment covering 674-691 (MENENLVENGADSDEDDN) has biased composition (acidic residues). Phosphoserine occurs at positions 686, 692, 698, 726, and 741. The segment covering 693-709 (FLKQQSPQEPKSLNWSS) has biased composition (polar residues).

In terms of assembly, interacts with NPC1L1; bridges NPC1L1 with MYO5B. Interacts with MYO5B; bridges NPC1L1 with MYO5B. Interacts with PXN; this complex stabilizes actin dynamics. Interacts with F-actin and G-actin. Interacts with LUZP1 (via C-terminus); both proteins restrict ciliation and may work together to regulate this process. Binds RAB40B (GTP-bound); interaction influences LIMA1 subcellular localization in lamellipodia during cell migration. In terms of processing, ubiquitinated by the ECS(RAB40B) complex leading to its degradation. Post-translationally, phosphorylation of the C-terminal region by MAPK1/MAPK3 reduces its association with F-actin and contributes to actin filament reorganization and enhances cell motility. As to expression, highly expressed in placenta, kidney, pancreas, prostate, ovary, spleen and heart. Also detected in lung, liver, brain, skeletal muscle, thymus, testis and intestine. Not detected in leukocytes. Isoform Beta expressed generally at very low levels. Isoform Alpha abundant in epithelial cells from mammary gland, prostate and in normal oral keratinocytes. Low levels in aortic endothelial cells and dermal fibroblasts. Not detectable in myocardium.

The protein localises to the cytoplasm. Its subcellular location is the cell junction. It localises to the focal adhesion. The protein resides in the cytoskeleton. It is found in the stress fiber. The protein localises to the cell membrane. Its subcellular location is the cell projection. It localises to the ruffle. The protein resides in the lamellipodium. Its function is as follows. Actin-binding protein involved in actin cytoskeleton regulation and dynamics. Increases the number and size of actin stress fibers and inhibits membrane ruffling. Inhibits actin filament depolymerization. Bundles actin filaments, delays filament nucleation and reduces formation of branched filaments. Acts as a negative regulator of primary cilium formation. Plays a role in cholesterol homeostasis. Influences plasma cholesterol levels through regulation of intestinal cholesterol absorption. May act as a scaffold protein by regulating NPC1L1 transportation, an essential protein for cholesterol absorption, to the plasma membrane by recruiting MYO5B to NPC1L1, and thus facilitates cholesterol uptake. This Homo sapiens (Human) protein is LIM domain and actin-binding protein 1.